We begin with the raw amino-acid sequence, 270 residues long: 4-hydroxy-tetrahydrodipicolinate reductase (270 aa).

Residues 8–13, Asp34, 102–104, and 128–131 each bind NAD(+); these read GALGRM, GTT, and SQNY. Residue His160 is the Proton donor/acceptor of the active site. His161 is a (S)-2,3,4,5-tetrahydrodipicolinate binding site. The active-site Proton donor is Lys164. 170–171 contributes to the (S)-2,3,4,5-tetrahydrodipicolinate binding site; sequence GT.

Belongs to the DapB family.

It localises to the cytoplasm. It carries out the reaction (S)-2,3,4,5-tetrahydrodipicolinate + NAD(+) + H2O = (2S,4S)-4-hydroxy-2,3,4,5-tetrahydrodipicolinate + NADH + H(+). The enzyme catalyses (S)-2,3,4,5-tetrahydrodipicolinate + NADP(+) + H2O = (2S,4S)-4-hydroxy-2,3,4,5-tetrahydrodipicolinate + NADPH + H(+). Its pathway is amino-acid biosynthesis; L-lysine biosynthesis via DAP pathway; (S)-tetrahydrodipicolinate from L-aspartate: step 4/4. Catalyzes the conversion of 4-hydroxy-tetrahydrodipicolinate (HTPA) to tetrahydrodipicolinate. This is 4-hydroxy-tetrahydrodipicolinate reductase from Methanococcus maripaludis (strain DSM 14266 / JCM 13030 / NBRC 101832 / S2 / LL).